The following is a 607-amino-acid chain: Type 3 secretion system secretin (607 aa).

The N-terminal stretch at 1–33 is a signal peptide; it reads MAPACTTAHRRRAPLAAVLMLSLLPLLSPHADA. Positions 277–332 are disordered; it reads ASSSDRVPVSPPLPGSGAAAAAGSPASVWPELSKGRRDESNPIDAGGGAELASDAP. Positions 291–306 are enriched in low complexity; sequence GSGAAAAAGSPASVWP.

The protein belongs to the bacterial secretin family. T3SS SctC subfamily. In terms of assembly, the core secretion machinery of the T3SS is composed of approximately 20 different proteins, including cytoplasmic components, a base, an export apparatus and a needle. This subunit is part of the base, which anchors the injectisome in the bacterial cell envelope. Forms a stable homooligomeric complex.

The protein localises to the cell outer membrane. In terms of biological role, component of the type III secretion system (T3SS), also called injectisome, which is used to inject bacterial effector proteins into eukaryotic host cells. Forms a ring-shaped multimeric structure with an apparent central pore in the outer membrane. Necessary for both basic pathogenicity and the induction of the hypersensitive response in resistant plants. In Xanthomonas euvesicatoria, this protein is Type 3 secretion system secretin.